The sequence spans 461 residues: Argininosuccinate lyase (461 aa).

It belongs to the lyase 1 family. Argininosuccinate lyase subfamily.

It localises to the cytoplasm. The enzyme catalyses 2-(N(omega)-L-arginino)succinate = fumarate + L-arginine. The protein operates within amino-acid biosynthesis; L-arginine biosynthesis; L-arginine from L-ornithine and carbamoyl phosphate: step 3/3. The chain is Argininosuccinate lyase from Symbiobacterium thermophilum (strain DSM 24528 / JCM 14929 / IAM 14863 / T).